The sequence spans 185 residues: Threonylcarbamoyl-AMP synthase (185 aa).

One can recognise a YrdC-like domain in the interval 5–185 (NWRVRLAARI…RDGRTGQRLR (181 aa)).

The protein belongs to the SUA5 family. TsaC subfamily.

It is found in the cytoplasm. It catalyses the reaction L-threonine + hydrogencarbonate + ATP = L-threonylcarbamoyladenylate + diphosphate + H2O. Functionally, required for the formation of a threonylcarbamoyl group on adenosine at position 37 (t(6)A37) in tRNAs that read codons beginning with adenine. Catalyzes the conversion of L-threonine, HCO(3)(-)/CO(2) and ATP to give threonylcarbamoyl-AMP (TC-AMP) as the acyladenylate intermediate, with the release of diphosphate. This chain is Threonylcarbamoyl-AMP synthase, found in Nitrosococcus oceani (strain ATCC 19707 / BCRC 17464 / JCM 30415 / NCIMB 11848 / C-107).